The chain runs to 208 residues: Uracil phosphoribosyltransferase (208 aa).

5-phospho-alpha-D-ribose 1-diphosphate is bound by residues R78, R103, and 130 to 138; that span reads DPMLATGGS. Residues I193 and 198–200 each bind uracil; that span reads GDA. D199 contributes to the 5-phospho-alpha-D-ribose 1-diphosphate binding site.

It belongs to the UPRTase family. Mg(2+) serves as cofactor.

The catalysed reaction is UMP + diphosphate = 5-phospho-alpha-D-ribose 1-diphosphate + uracil. It functions in the pathway pyrimidine metabolism; UMP biosynthesis via salvage pathway; UMP from uracil: step 1/1. Allosterically activated by GTP. Catalyzes the conversion of uracil and 5-phospho-alpha-D-ribose 1-diphosphate (PRPP) to UMP and diphosphate. The polypeptide is Uracil phosphoribosyltransferase (Glaesserella parasuis serovar 5 (strain SH0165) (Haemophilus parasuis)).